A 512-amino-acid chain; its full sequence is Ammonium transporter 2 (512 aa).

Residues 1 to 47 (MSSVNSIPTATSTVYISVLPATATPSGGSGGNVLHEDLNKFYDYGNT) are Extracellular-facing. A helical membrane pass occupies residues 48-68 (SWILACTPLCLIMVPGVAFFY). Topologically, residues 69–77 (SGLARRKNT) are cytoplasmic. Residues 78–98 (LALIMLSMLGLCVSFFQWYFW) form a helical membrane-spanning segment. Residues 99–137 (GYSLAFSQTGTSGYIGNLRHFAFIRTLADYSPGSNNIPE) are Extracellular-facing. Residues 138 to 158 (LVFANFQGMFAAITVALFTGA) traverse the membrane as a helical segment. Topologically, residues 159–167 (AAERGRIGP) are cytoplasmic. The helical transmembrane segment at 168–188 (MLIITFVWLTVVYCPIACWIW) threads the bilayer. The Extracellular portion of the chain corresponds to 189 to 201 (NPNGWAFKFGVYD). A helical transmembrane segment spans residues 202–222 (FAGGGPVEVGSGFAALAYTVC). At 223–238 (LGRRSKFVEEQFRPHS) the chain is on the cytoplasmic side. Residues 239–259 (VLNVVLGTSLLWFGWLGFNGG) form a helical membrane-spanning segment. Topologically, residues 260–267 (SAYGSNLR) are extracellular. A helical transmembrane segment spans residues 268–288 (AAMAITNTNLAGAVAGLVWVI). Residues 289–300 (YDYIFRTRKWST) are Cytoplasmic-facing. The helical transmembrane segment at 301 to 321 (IGFCSGVVAGLVAATPCAGFV) threads the bilayer. Serine 322 is a topological domain (extracellular). Residues 323 to 343 (PHASLAIGAITGLCCNWAIKL) form a helical membrane-spanning segment. At 344 to 354 (KSHMRIDDAMD) the chain is on the cytoplasmic side. Residues 355–375 (IFAIHGVAGFVGTFLNGLFAV) form a helical membrane-spanning segment. At 376–406 (DYIAAMDGIYVGENKIRGGWFDHHWRQLGLQ) the chain is on the extracellular side. Residues 407-427 (MAYICAVGAYDFVVTFIILFI) form a helical membrane-spanning segment. At 428 to 512 (TDKIPYLQLR…TNPLELGLTI (85 aa)) the chain is on the cytoplasmic side.

Belongs to the ammonia transporter channel (TC 1.A.11.2) family.

It is found in the membrane. In terms of biological role, transporter for ammonium to use as a nitrogen source. In Schizosaccharomyces pombe (strain 972 / ATCC 24843) (Fission yeast), this protein is Ammonium transporter 2 (amt2).